Consider the following 390-residue polypeptide: MTILSPKDVVIVDGVRSAMGKTKNGMFRHVRADSMSAELVRALVERNDFDPRDVEDIIWGCVNQTLEQGLNIGRNIGLLAGIPKTAGGQTINRLCGSSMQALHTAAAQIMTGQGDVFIIGGVEHMGHVGMMHGVDLNPEASKHYAKASNMMGLTAEMLGRMNNITREEQDAFGLESHRRAWAATTEGRFDNEIIGIEGHDEAGRLQLCTVDEVIRPDATMEQMQKLRPAFDPVGGTVTAATSSALSDGASAMLIMSAQKAKELGLKPRARIRSMAIAGCDAAIMGYGPVPATQKALKRAGMSIDDMQTIELNEAFAAQGLSVLKALNLTDKQDIVNINGGAIALGHPLGCSGARITVTLLNAMEQSDTEIGLATMCIGLGQGIATIIERV.

Cys-95 functions as the Acyl-thioester intermediate in the catalytic mechanism. Catalysis depends on proton acceptor residues His-346 and Cys-376.

Belongs to the thiolase-like superfamily. Thiolase family. In terms of assembly, heterotetramer of two alpha chains (FadB) and two beta chains (FadA).

It localises to the cytoplasm. The enzyme catalyses an acyl-CoA + acetyl-CoA = a 3-oxoacyl-CoA + CoA. It participates in lipid metabolism; fatty acid beta-oxidation. Functionally, catalyzes the final step of fatty acid oxidation in which acetyl-CoA is released and the CoA ester of a fatty acid two carbons shorter is formed. The sequence is that of 3-ketoacyl-CoA thiolase from Psychrobacter cryohalolentis (strain ATCC BAA-1226 / DSM 17306 / VKM B-2378 / K5).